Here is a 410-residue protein sequence, read N- to C-terminus: Putative ribosomal large subunit pseudouridine synthase SVR1, chloroplastic (410 aa).

Residues 1 to 35 (MASVAASSSISFAASFLKIKAFPLSPRFFPIRTLR) constitute a chloroplast transit peptide. The tract at residues 96–143 (HNLAIDATTQNPKKKDKSKKKQPQATSSSSATTTASSPASHSEVKPKL) is disordered. Residues 107–117 (PKKKDKSKKKQ) show a composition bias toward basic residues. Residues 118–135 (PQATSSSSATTTASSPAS) are compositionally biased toward low complexity. Positions 160–229 (QRLSKVLAAA…PKVYFALNKP (70 aa)) constitute an S4 RNA-binding domain. Aspartate 274 (nucleophile) is an active-site residue.

It belongs to the pseudouridine synthase RsuA family. As to expression, highly expressed in young seedlings. Expressed in roots, rosette leaves, cauline leaves, stems and flowers.

The protein resides in the plastid. Its subcellular location is the chloroplast. Functionally, responsible for synthesis of pseudouridine in chloroplastic 23S ribosomal RNA. Necessary for normal chloroplast rRNA processing and translation. Required for normal chloroplast development and maintenance. May function in other plastids, such as root amyloplasts. The chain is Putative ribosomal large subunit pseudouridine synthase SVR1, chloroplastic (SVR1) from Arabidopsis thaliana (Mouse-ear cress).